The primary structure comprises 50 residues: Protein hunchback (50 aa).

3 consecutive C2H2-type zinc fingers follow at residues 1 to 5 (HLRNH), 11 to 33 (FKCG…MKSH), and 39 to 50 (YRCANCCYATKY).

The protein belongs to the hunchback C2H2-type zinc-finger protein family.

It localises to the nucleus. Its function is as follows. Gap class segmentation protein that controls development of head structures. The chain is Protein hunchback (hb) from Pholcus phalangioides (Longbodied cellar spider).